The chain runs to 470 residues: Cupincin (470 aa).

The signal sequence occupies residues 1-34 (MAKKKTSSSMARSQLAALLISLCFLSLASNAVGW). Over residues 36 to 52 (RRGEREEEDERRRHGGE) the composition is skewed to basic and acidic residues. Disordered stretches follow at residues 36 to 59 (RRGEREEEDERRRHGGEGGRPYHL) and 240 to 261 (KSCSRGGGGGSGSEWEIKPSSL). 2 Cupin type-1 domains span residues 57-215 (YHLG…EELE) and 259-445 (SSLT…AREA). A glycan (N-linked (GlcNAc...) asparagine) is linked at N297. The segment at 330 to 368 (PHVSGGGSSERREREREHGRRREEEQGEEEHGERGEKAR) is disordered. Positions 338–367 (SERREREREHGRRREEEQGEEEHGERGEKA) are enriched in basic and acidic residues. Residues H347, E352, and H360 each coordinate Zn(2+).

Belongs to the 7S seed storage protein family. In terms of assembly, homotrimer. Requires Zn(2+) as cofactor.

It localises to the secreted. Its function is as follows. Seed storage protein. Globulin-like protein that acts as a zinc metalloprotease. Cleaves specifically between Leu-15 and Tyr-16 of insulin B chain, and Gln-1 and Leu-2 of neurotensin (NT) peptide in vitro. May play a role as an initiating endopeptidase in germinating seeds. The chain is Cupincin from Oryza sativa subsp. japonica (Rice).